The chain runs to 648 residues: Rho GTPase-activating protein 25 (648 aa).

In terms of domain architecture, PH spans 46 to 151; it reads RPIKVGWLKK…WVKFLRRVAG (106 aa). The Rho-GAP domain maps to 160 to 354; sequence QRLDETVAYE…MMIRDHEVLF (195 aa). The segment at 356-559 is disordered; the sequence is KSKDAPISPP…DLDSLQRTVQ (204 aa). S363, S396, and S403 each carry phosphoserine. Over residues 393-410 the composition is skewed to polar residues; that stretch reads RTDSFSNTASSPDATSPT. A Phosphothreonine modification is found at T407. The span at 417-431 shows a compositional bias: basic and acidic residues; the sequence is QHQEDSGKAPRENPG. Composition is skewed to polar residues over residues 453-462 and 497-515; these read SAFQGTTSSK and DQRTSTYDNVPTSPQSQGN. The residue at position 537 (S537) is a Phosphoserine. The stretch at 540–641 forms a coiled coil; it reads EAGSKNSGED…VKEFVKSMEK (102 aa).

Functionally, GTPase activator for the Rho-type GTPases by converting them to an inactive GDP-bound state. In Mus musculus (Mouse), this protein is Rho GTPase-activating protein 25 (Arhgap25).